Consider the following 284-residue polypeptide: Putative ABC transporter ATP-binding protein PH1815 (284 aa).

Residues 4–244 enclose the ABC transporter domain; the sequence is IEVEDVSFRY…VEFLRTIGVK (241 aa). 38-45 serves as a coordination point for ATP; that stretch reads GPSGSGKS.

Belongs to the ABC transporter superfamily.

The protein resides in the cell membrane. Functionally, probably part of an ABC transporter complex. Responsible for energy coupling to the transport system. The polypeptide is Putative ABC transporter ATP-binding protein PH1815 (Pyrococcus horikoshii (strain ATCC 700860 / DSM 12428 / JCM 9974 / NBRC 100139 / OT-3)).